Consider the following 179-residue polypeptide: Phospholipase A2 (179 aa).

The first 21 residues, 1 to 21 (MHALRSSVLALWLCLHVSVRA), serve as a signal peptide directing secretion. Positions 22–39 (WMTYRSANGLDEYEPEDR) are excised as a propeptide. Trp-47, Gly-49, and Gly-51 together coordinate Ca(2+). 5 disulfide bridges follow: Cys-48/Cys-70, Cys-69/Cys-109, Cys-76/Cys-102, Cys-100/Cys-133, and Cys-142/Cys-150. Residue His-73 is part of the active site. Residue Asp-74 coordinates Ca(2+). Asp-103 is a catalytic residue.

This sequence belongs to the phospholipase A2 family. Group III subfamily. It depends on Ca(2+) as a cofactor. As to expression, expressed by the venom gland.

It localises to the secreted. It catalyses the reaction a 1,2-diacyl-sn-glycero-3-phosphocholine + H2O = a 1-acyl-sn-glycero-3-phosphocholine + a fatty acid + H(+). Its function is as follows. May potentiate Xylotoxin(1)-Xa1a DRG activation and cell lysis, since the orthologous A.mellifera PA2 potentiates Xylotoxin(1)-Xa1a DRG activation and cell lysis. In vivo, intraplantar injection in mice may potentiate spontaneous pain behaviors and paw swelling caused by Xylotoxin(1)-Xa1a, since the orthologous A.mellifera PA2 shows this effect. PLA2 catalyzes the calcium-dependent hydrolysis of the 2-acyl groups in 3-sn-phosphoglycerides. In Xylocopa aruana (Great carpenter bee), this protein is Phospholipase A2.